A 724-amino-acid polypeptide reads, in one-letter code: Pediocin PA-1 transport/processing ATP-binding protein PedD (724 aa).

One can recognise a Peptidase C39 domain in the interval 13–140; that stretch reads QVDENDCGLA…KEWTQIAIII (128 aa). The active site involves C19. The next 6 helical transmembrane spans lie at 170–190, 207–227, 284–304, 307–327, 396–416, and 426–446; these read IGLI…GAYF, LSLV…INYI, TTLT…FLAY, INLF…VWLF, IKAA…TFFV, and LLTY…IINL. An ABC transmembrane type-1 domain is found at 170-452; sequence IGLIITAAAI…IINLQPKLQA (283 aa). In terms of domain architecture, ABC transporter spans 486–722; the sequence is IEVNHVSFNY…NGYYARLIHN (237 aa). 519-526 is a binding site for ATP; sequence GMSGSGKT.

Belongs to the ABC transporter superfamily. Pediocin PA-1 exporter (TC 3.A.1.112.2) family.

It is found in the cell membrane. Involved in the export process of the bacteriocin pediocin PA-1/AcH. Is also essential for pediocin production. The polypeptide is Pediocin PA-1 transport/processing ATP-binding protein PedD (pedD) (Pediococcus acidilactici).